Consider the following 508-residue polypeptide: Purine-cytosine permease fcyB (508 aa).

The Cytoplasmic portion of the chain corresponds to 1–72; that stretch reads MAGAFDFDLE…AEQTDTSVFN (72 aa). A helical transmembrane segment spans residues 73–93; it reads IGSMWLAANMVVSSFAIGVLG. Residues 94–104 are Extracellular-facing; that stretch reads KSVYSLGFVDA. A helical transmembrane segment spans residues 105–125; sequence ILTVLFFNLLGIMTVCFFSCF. Topologically, residues 126–147 are cytoplasmic; that stretch reads GPFGLRQMVFSRLWFGWYVTKG. The chain crosses the membrane as a helical span at residues 148-168; it reads FAVLNILACLGWSAANAIVGA. The Extracellular portion of the chain corresponds to 169–177; sequence QMLHAVNSD. A helical membrane pass occupies residues 178 to 198; sequence VPGFAAILIISICTLLVTFAG. The Cytoplasmic portion of the chain corresponds to 199 to 200; that stretch reads YK. Residues 201–221 traverse the membrane as a helical segment; that stretch reads VVHLYEYWSWIPTFIVFMIIL. Topologically, residues 222–243 are extracellular; it reads GTFAHSGDFQNIPMGVGTSEMG. The helical transmembrane segment at 244 to 264 threads the bilayer; the sequence is SVLSFGSAVYGFATGWTSYAA. Residues 265-278 lie on the Cytoplasmic side of the membrane; that stretch reads DYTVYQPANRSKRK. A helical membrane pass occupies residues 279 to 299; sequence IFLSTWLGLIVPLLFVEMLGV. Topologically, residues 300–323 are extracellular; sequence AVMTATDIKGSKYDVGYATSGNGG. Residues 324 to 344 traverse the membrane as a helical segment; it reads LIAAVLQPLGGFGDFCLVILA. The Cytoplasmic portion of the chain corresponds to 345-374; that stretch reads LSIVANNCPNFYSVALTVQVLSRYAQRVPR. The chain crosses the membrane as a helical span at residues 375 to 395; that stretch reads FIWTLFGTGVSIAIAIPGYSH. Topologically, residues 396–404 are extracellular; sequence FETVLENFM. The chain crosses the membrane as a helical span at residues 405–425; sequence NFIAYWLAIYSAIAIMDHFVF. Over 426 to 442 the chain is Cytoplasmic; the sequence is KRGFSGYVVENFDKREK. The helical transmembrane segment at 443 to 463 threads the bilayer; the sequence is LPVGIAATIAFGFGVAGMITG. The Extracellular portion of the chain corresponds to 464 to 477; sequence MSQPWYVGPIARHA. The chain crosses the membrane as a helical span at residues 478–498; it reads AGGDVGFELGFAFAAFSYLCL. Residues 499–508 lie on the Cytoplasmic side of the membrane; it reads RPFEIKFFGR.

It belongs to the purine-cytosine permease (2.A.39) family.

It is found in the cell membrane. Its function is as follows. This permease has a broad specificity towards purines, and also transports cytosine, but neither uracil nor thymine. Contributes very little in purine uptake. Its major role may be the uptake of cytosine. The sequence is that of Purine-cytosine permease fcyB (fcyB) from Emericella nidulans (strain FGSC A4 / ATCC 38163 / CBS 112.46 / NRRL 194 / M139) (Aspergillus nidulans).